The sequence spans 179 residues: Cell division protein SepF (179 aa).

The tract at residues 22 to 53 is disordered; it reads LPYEKRDEPVFTPVNSSQEPALPMNQPSQSVG. The span at 34-53 shows a compositional bias: polar residues; it reads PVNSSQEPALPMNQPSQSVG.

Belongs to the SepF family. Homodimer. Interacts with FtsZ.

The protein resides in the cytoplasm. Cell division protein that is part of the divisome complex and is recruited early to the Z-ring. Probably stimulates Z-ring formation, perhaps through the cross-linking of FtsZ protofilaments. Its function overlaps with FtsA. The protein is Cell division protein SepF of Streptococcus pneumoniae (strain P1031).